A 427-amino-acid polypeptide reads, in one-letter code: Glutamate-1-semialdehyde 2,1-aminomutase (427 aa).

At K263 the chain carries N6-(pyridoxal phosphate)lysine.

This sequence belongs to the class-III pyridoxal-phosphate-dependent aminotransferase family. HemL subfamily. Homodimer. Pyridoxal 5'-phosphate is required as a cofactor.

It is found in the cytoplasm. The enzyme catalyses (S)-4-amino-5-oxopentanoate = 5-aminolevulinate. It participates in porphyrin-containing compound metabolism; protoporphyrin-IX biosynthesis; 5-aminolevulinate from L-glutamyl-tRNA(Glu): step 2/2. This chain is Glutamate-1-semialdehyde 2,1-aminomutase, found in Caldicellulosiruptor saccharolyticus (strain ATCC 43494 / DSM 8903 / Tp8T 6331).